The chain runs to 498 residues: MTVFLSFAFLAAILTHIGCSNQRRSPENSGRRYNRIQHGQCAYTFILPEHDGNCRESTTDQYNTNALQRDAPHVEPDFSSQKLQHLEHVMENYTQWLQKLENYIVENMKSEMAQIQQNAVQNHTATMLEIGTSLLSQTAEQTRKLTDVETQVLNQTSRLEIQLLENSLSTYKLEKQLLQQTNEILKIHEKNSLLEHKILEMEGKHKEELDTLKEEKENLQGLVTRQTYIIQELEKQLNRATTNNSVLQKQQLELMDTVHNLVNLCTKEGVLLKGGKREEEKPFRDCADVYQAGFNKSGIYTIYINNMPEPKKVFCNMDVNGGGWTVIQHREDGSLDFQRGWKEYKMGFGNPSGEYWLGNEFIFAITSQRQYMLRIELMDWEGNRAYSQYDRFHIGNEKQNYRLYLKGHTGTAGKQSSLILHGADFSTKDADNDNCMCKCALMLTGGWWFDACGPSNLNGMFYTAGQNHGKLNGIKWHYFKGPSYSLRSTTMMIRPLDF.

Positions 1–15 are cleaved as a signal peptide; the sequence is MTVFLSFAFLAAILT. Residues 81-119 adopt a coiled-coil conformation; that stretch reads QKLQHLEHVMENYTQWLQKLENYIVENMKSEMAQIQQNA. Residues N92, N122, N154, N243, and N295 are each glycosylated (N-linked (GlcNAc...) asparagine). Residues 153-261 are a coiled coil; it reads LNQTSRLEIQ…LELMDTVHNL (109 aa). One can recognise a Fibrinogen C-terminal domain in the interval 277 to 497; the sequence is REEEKPFRDC…STTMMIRPLD (221 aa). 2 disulfides stabilise this stretch: C286–C315 and C439–C452.

In terms of assembly, homooligomer. Interacts with TEK/TIE2. Interacts with SVEP1/polydom. Interacts with THBD; this interaction significantly inhibits the generation of activated PC and TAFIa/CPB2 by the thrombin/thrombomodulin complex. Post-translationally, glycosylated.

It localises to the secreted. Its function is as follows. Binds and activates TEK/TIE2 receptor by inducing its dimerization and tyrosine phosphorylation. Plays an important role in the regulation of angiogenesis, endothelial cell survival, proliferation, migration, adhesion and cell spreading, reorganization of the actin cytoskeleton, but also maintenance of vascular quiescence. Required for normal angiogenesis and heart development during embryogenesis. After birth, activates or inhibits angiogenesis, depending on the context. Inhibits angiogenesis and promotes vascular stability in quiescent vessels, where endothelial cells have tight contacts. In quiescent vessels, ANGPT1 oligomers recruit TEK to cell-cell contacts, forming complexes with TEK molecules from adjoining cells, and this leads to preferential activation of phosphatidylinositol 3-kinase and the AKT1 signaling cascades. In migrating endothelial cells that lack cell-cell adhesions, ANGT1 recruits TEK to contacts with the extracellular matrix, leading to the formation of focal adhesion complexes, activation of PTK2/FAK and of the downstream kinases MAPK1/ERK2 and MAPK3/ERK1, and ultimately to the stimulation of sprouting angiogenesis. Mediates blood vessel maturation/stability. Implicated in endothelial developmental processes later and distinct from that of VEGF. Appears to play a crucial role in mediating reciprocal interactions between the endothelium and surrounding matrix and mesenchyme. The protein is Angiopoietin-1 (ANGPT1) of Homo sapiens (Human).